Reading from the N-terminus, the 754-residue chain is 5-methyltetrahydropteroyltriglutamate--homocysteine methyltransferase (754 aa).

5-methyltetrahydropteroyltri-L-glutamate contacts are provided by residues 17-20 and K117; that span reads RELK. Residues 431–433 and E484 contribute to the L-homocysteine site; that span reads IGS. Residues 431 to 433 and E484 each bind L-methionine; that span reads IGS. Residues 515–516 and W561 each bind 5-methyltetrahydropteroyltri-L-glutamate; that span reads RC. Residue D599 coordinates L-homocysteine. D599 provides a ligand contact to L-methionine. A 5-methyltetrahydropteroyltri-L-glutamate-binding site is contributed by E605. Residues H641, C643, and E665 each coordinate Zn(2+). H694 serves as the catalytic Proton donor. C726 contacts Zn(2+).

Belongs to the vitamin-B12 independent methionine synthase family. Zn(2+) serves as cofactor.

The catalysed reaction is 5-methyltetrahydropteroyltri-L-glutamate + L-homocysteine = tetrahydropteroyltri-L-glutamate + L-methionine. Its pathway is amino-acid biosynthesis; L-methionine biosynthesis via de novo pathway; L-methionine from L-homocysteine (MetE route): step 1/1. In terms of biological role, catalyzes the transfer of a methyl group from 5-methyltetrahydrofolate to homocysteine resulting in methionine formation. This is 5-methyltetrahydropteroyltriglutamate--homocysteine methyltransferase from Salmonella arizonae (strain ATCC BAA-731 / CDC346-86 / RSK2980).